Reading from the N-terminus, the 339-residue chain is MERYEVIKDIGSGNFGVAKLVRDVRTKELFAVKFIERGQKIDENVQREIMNHRSLRHPNIVRFKEVVLTPTHLAIVMEYAAGGELFERICSAGRFSEDEARFFFQQLISGVSYCHSMQICHRDLKLENTLLDGSIAPRLKICDFGYSKSSLLHSQPKSTVGTPAYIAPEVLARKEYDGKVADVWSCGVTLYVMLVGAYPFEDPDEPRNFRKTITRILSVQYMVPDYVRVSMECRHLLSRIFVANPEQRITIPEIKNHPWFLKNLPIEMTDEYQMSVQMNDINTPSQGLEEIMAIIQEARKPGDGSKFSGQIPGLGSMELDDVDTDDIDVEDSGDFVCAL.

One can recognise a Protein kinase domain in the interval 4–260; it reads YEVIKDIGSG…IPEIKNHPWF (257 aa). Residues 10-18 and Lys-33 contribute to the ATP site; that span reads IGSGNFGVA. The Proton acceptor role is filled by Asp-123. The C-terminal stretch occupies residues 253–339; sequence EIKNHPWFLK…EDSGDFVCAL (87 aa).

The protein belongs to the protein kinase superfamily. Ser/Thr protein kinase family. In terms of assembly, interacts with BZIP46. Interacts with ABI5 and PP2C30. Interacts with PP2C51. Post-translationally, phosphorylated. Expressed in leaf blades, leaf sheaths and roots. Expressed in shoots and roots of young seedlings.

Its subcellular location is the cytoplasm. The protein resides in the nucleus. It catalyses the reaction L-seryl-[protein] + ATP = O-phospho-L-seryl-[protein] + ADP + H(+). The enzyme catalyses L-threonyl-[protein] + ATP = O-phospho-L-threonyl-[protein] + ADP + H(+). Activated by phosphorylation in response to hyperosmotic stress within 5 minutes. In terms of biological role, may play a role in signal transduction of hyperosmotic response. Can phosphorylate BZIP46 in vitro. Together with ABI5, PP2C30 and PYL5, is part of an abscisic acid (ABA) signaling unit that modulates seed germination and early seedling growth. This chain is Serine/threonine-protein kinase SAPK2 (SAPK2), found in Oryza sativa subsp. japonica (Rice).